Here is a 1372-residue protein sequence, read N- to C-terminus: DNA-directed RNA polymerase subunit beta (1372 aa).

This sequence belongs to the RNA polymerase beta chain family. The RNAP catalytic core consists of 2 alpha, 1 beta, 1 beta' and 1 omega subunit. When a sigma factor is associated with the core the holoenzyme is formed, which can initiate transcription.

It catalyses the reaction RNA(n) + a ribonucleoside 5'-triphosphate = RNA(n+1) + diphosphate. In terms of biological role, DNA-dependent RNA polymerase catalyzes the transcription of DNA into RNA using the four ribonucleoside triphosphates as substrates. This is DNA-directed RNA polymerase subunit beta from Psychrobacter sp. (strain PRwf-1).